The primary structure comprises 656 residues: Leucine aminopeptidase 2 (656 aa).

Substrate is bound by residues Q173–E175 and P302–E307. H331 contributes to the Zn(2+) binding site. Residue E332 is the Proton acceptor of the active site. Zn(2+)-binding residues include H335 and E354. The active-site Proton donor is the Y420.

This sequence belongs to the peptidase M1 family. It depends on Zn(2+) as a cofactor.

The protein resides in the cytoplasm. The protein localises to the nucleus. The enzyme catalyses an epoxide + H2O = an ethanediol. In terms of biological role, aminopeptidase that preferentially cleaves di- and tripeptides. Also has low epoxide hydrolase activity (in vitro). Can hydrolyze the epoxide leukotriene LTA(4) but it forms preferentially 5,6-dihydroxy-7,9,11,14-eicosatetraenoic acid rather than the cytokine leukotriene B(4) as the product compared to the homologous mammalian enzyme (in vitro). The chain is Leucine aminopeptidase 2 from Vanderwaltozyma polyspora (strain ATCC 22028 / DSM 70294 / BCRC 21397 / CBS 2163 / NBRC 10782 / NRRL Y-8283 / UCD 57-17) (Kluyveromyces polysporus).